The chain runs to 224 residues: Flagellar L-ring protein (224 aa).

Positions 1–15 are cleaved as a signal peptide; that stretch reads MLRYLMVGSLLVLAG. Residue cysteine 16 is the site of N-palmitoyl cysteine attachment. Cysteine 16 carries S-diacylglycerol cysteine lipidation.

This sequence belongs to the FlgH family. The basal body constitutes a major portion of the flagellar organelle and consists of four rings (L,P,S, and M) mounted on a central rod.

Its subcellular location is the cell outer membrane. It is found in the bacterial flagellum basal body. Functionally, assembles around the rod to form the L-ring and probably protects the motor/basal body from shearing forces during rotation. The sequence is that of Flagellar L-ring protein from Shewanella amazonensis (strain ATCC BAA-1098 / SB2B).